A 513-amino-acid polypeptide reads, in one-letter code: ATP synthase subunit alpha (513 aa).

An ATP-binding site is contributed by 169 to 176 (GDRQCGKT).

The protein belongs to the ATPase alpha/beta chains family. F-type ATPases have 2 components, CF(1) - the catalytic core - and CF(0) - the membrane proton channel. CF(1) has five subunits: alpha(3), beta(3), gamma(1), delta(1), epsilon(1). CF(0) has three main subunits: a(1), b(2) and c(9-12). The alpha and beta chains form an alternating ring which encloses part of the gamma chain. CF(1) is attached to CF(0) by a central stalk formed by the gamma and epsilon chains, while a peripheral stalk is formed by the delta and b chains.

It is found in the cell inner membrane. The catalysed reaction is ATP + H2O + 4 H(+)(in) = ADP + phosphate + 5 H(+)(out). Functionally, produces ATP from ADP in the presence of a proton gradient across the membrane. The alpha chain is a regulatory subunit. The chain is ATP synthase subunit alpha from Burkholderia ambifaria (strain MC40-6).